The primary structure comprises 358 residues: Microbial Terpene synthase-like protein 13 (358 aa).

It belongs to the terpene synthase family.

No terpene synthase activity detected in vitro. This chain is Microbial Terpene synthase-like protein 13, found in Selaginella moellendorffii (Spikemoss).